A 290-amino-acid polypeptide reads, in one-letter code: MRQPPDGEGSVQVEMDPALHIETAKVFAIYGKGGIGKSTTSSNLSAAFSKLGKRVVQIGCDPKHDSTFTLTKRLVPTVIDVLQAVHFHTEELRVEDFVYEGYNGVMCVEAGGPPAGTGCGGYVVGQTVKLLKEHHILEDADVVVFDVLGDVVCGGFATPLQHAERALVVAANDFDSIFAANRIAAAIQAKAKNYDVRLGGIIANRSVATDQIERFNARSGMRTLAHFPDLDVIRRSRLCKSTLFEMEPSPELAAVQQEYLRLAEALWEGVEPLTATPLIDREIFDLLGFD.

Residues 34-39 (GIGKST) and Lys-63 contribute to the ATP site. Ser-38 is a binding site for Mg(2+). Positions 119 and 153 each coordinate [4Fe-4S] cluster. ATP-binding positions include 204–205 (NR) and 228–230 (PDL).

Belongs to the NifH/BchL/ChlL family. Homodimer. Protochlorophyllide reductase is composed of three subunits; BchL, BchN and BchB. [4Fe-4S] cluster serves as cofactor.

It catalyses the reaction chlorophyllide a + oxidized 2[4Fe-4S]-[ferredoxin] + 2 ADP + 2 phosphate = protochlorophyllide a + reduced 2[4Fe-4S]-[ferredoxin] + 2 ATP + 2 H2O. It functions in the pathway porphyrin-containing compound metabolism; bacteriochlorophyll biosynthesis (light-independent). Component of the dark-operative protochlorophyllide reductase (DPOR) that uses Mg-ATP and reduced ferredoxin to reduce ring D of protochlorophyllide (Pchlide) to form chlorophyllide a (Chlide). This reaction is light-independent. The L component serves as a unique electron donor to the NB-component of the complex, and binds Mg-ATP. This Rhodospirillum rubrum protein is Light-independent protochlorophyllide reductase iron-sulfur ATP-binding protein.